The following is a 124-amino-acid chain: MEYEFRRNSLTGTYLASFSMDHEVLGQWFSEELGPELAKIQQVLDIIKEIQAGKRDSWRLIGGDLTLDLDEEQARIYANALGFEQEYELEESMSLYDAESEAYCGLEDLEEALLSWYEFVQKGR.

Belongs to the UPF0231 family.

This chain is UPF0231 protein Shewana3_0655, found in Shewanella sp. (strain ANA-3).